Consider the following 1211-residue polypeptide: Endoplasmic reticulum transmembrane helix translocase (1211 aa).

Residues 1–23 (MGSKALITSPDISSGQLYIKLPT) lie on the Cytoplasmic side of the membrane. A helical transmembrane segment spans residues 24-44 (FFHLYVWPFALFVYPYIGYVY). Topologically, residues 45 to 54 (QNKLYSEEVR) are lumenal. The helical transmembrane segment at 55–75 (YLTYIAVGTIHALFWLAGEWN) threads the bilayer. The Cytoplasmic portion of the chain corresponds to 76–191 (TKVYCLMTCR…FDIPIPTFGT (116 aa)). The segment at 155–185 (TIGTLKKSTGLTNIQSEIFLYRYGKNCFDIP) is A-domain; part 1. Residues 192 to 212 (LFKEHAVAPFFVFQIFCCVLW) traverse the membrane as a helical segment. Topologically, residues 213 to 216 (CLDD) are lumenal. The chain crosses the membrane as a helical span at residues 217 to 237 (YWYFSLFSMFMIIALECSVVW). Over 238-397 (QRQRTLTEFR…EKVTANNRES (160 aa)) the chain is Cytoplasmic. Residues 250 to 388 (SIKPYEIQVY…LVRTMVFSSE (139 aa)) form an A-domain; part 2 region. A helical transmembrane segment spans residues 398–418 (LYFILFLLVFAIAASGYVWHV). Residues 419-1057 (GSKTERSRYK…KERPQAGIFN (639 aa)) are Lumenal-facing. The P-domain; part 1 stretch occupies residues 464–493 (YIYCTEPFRIPLSGHLDICCFDKTGTLTEE). Catalysis depends on D485, which acts as the 4-aspartylphosphate intermediate. The Mg(2+) site is built by D485 and T487. ATP contacts are provided by residues 485–487 (DKT), F587, R644, D710, and 824–828 (DGTND). An N-domain region spans residues 495 to 685 (MVVQGIAGVN…FAGFLIFTSP (191 aa)). Residues 688-845 (EDARQTVQML…HVGVALLNAS (158 aa)) form a P-domain; part 2 region. Residue D824 coordinates Mg(2+). Positions 846–955 (EEDMLEMQER…NASDDEAPKL (110 aa)) are arm-like. A P-domain; part 3 region spans residues 956–971 (KLGDASVAAPFTSKLA). Residues 1058–1078 (TYIIGSVLGQFAIHIVTLIYI) form a helical membrane-spanning segment. Over 1079-1100 (TRVVYLYEDPLEKVDLEETFKP) the chain is Cytoplasmic. Residues 1101 to 1121 (SLLNTAIYLLQLIQQVSTFAI) form a helical membrane-spanning segment. Residues 1122–1136 (NYQGRPFREALSENK) are Lumenal-facing. The helical transmembrane segment at 1137 to 1157 (GMYYGLLGIAFVAIAGVTEFS) threads the bilayer. The Cytoplasmic segment spans residues 1158–1174 (PELNAKLQLVKMAYNFQ). The chain crosses the membrane as a helical span at residues 1175-1195 (IQLLATMVVDYAACWIIEELM). At 1196 to 1211 (KKYFRDNKPKEIVLRN) the chain is on the lumenal side.

Belongs to the cation transport ATPase (P-type) (TC 3.A.3) family. Type V subfamily. Mg(2+) is required as a cofactor.

It is found in the endoplasmic reticulum membrane. The enzyme catalyses [protein]-with a C-terminal TM segment(out) + ATP + H2O = [protein]-with a C-terminal TM segment(in) + ADP + phosphate + H(+). Its function is as follows. Endoplasmic reticulum translocase required to remove mitochondrial transmembrane proteins mistargeted to the endoplasmic reticulum. Acts as a dislocase that mediates the ATP-dependent extraction of mislocalized mitochondrial transmembrane proteins from the endoplasmic reticulum membrane. Specifically binds mitochondrial tail-anchored transmembrane proteins: has an atypically large substrate-binding pocket that recognizes and binds moderately hydrophobic transmembranes with short hydrophilic lumenal domains. Involved in controlling nuclear calcium ion levels. Required for cytokinesis and stabilizing microtubules. Required for assembly of the forespore membrane. Involved in calcium transport to the endoplasmic reticulum. This is Endoplasmic reticulum transmembrane helix translocase from Schizosaccharomyces pombe (strain 972 / ATCC 24843) (Fission yeast).